The sequence spans 119 residues: Beta-2-microglobulin (119 aa).

The first 20 residues, 1-20 (MASSVVVALLVLLSLSGLEA), serve as a signal peptide directing secretion. In terms of domain architecture, Ig-like C1-type spans 25 to 114 (PKIQVYSRHP…VTFSTPKTVK (90 aa)). A disulfide bond links cysteine 45 and cysteine 100.

This sequence belongs to the beta-2-microglobulin family. Heterodimer of an alpha chain and a beta chain. Beta-2-microglobulin is the beta-chain of major histocompatibility complex class I molecules.

Its subcellular location is the secreted. Functionally, component of the class I major histocompatibility complex (MHC). Involved in the presentation of peptide antigens to the immune system. This chain is Beta-2-microglobulin (B2M), found in Callithrix aurita (White-eared marmoset).